The chain runs to 285 residues: Eukaryotic translation initiation factor 3 subunit F-2 (285 aa).

Residues 11–145 (VVLQPLVLFQ…TRLYCGVEMG (135 aa)) enclose the MPN domain.

It belongs to the eIF-3 subunit F family. As to quaternary structure, component of the eukaryotic translation initiation factor 3 (eIF-3) complex. The eIF-3 complex interacts with pix.

It is found in the cytoplasm. In terms of biological role, component of the eukaryotic translation initiation factor 3 (eIF-3) complex, which is involved in protein synthesis of a specialized repertoire of mRNAs and, together with other initiation factors, stimulates binding of mRNA and methionyl-tRNAi to the 40S ribosome. The eIF-3 complex specifically targets and initiates translation of a subset of mRNAs involved in cell proliferation. The protein is Eukaryotic translation initiation factor 3 subunit F-2 of Drosophila ananassae (Fruit fly).